A 429-amino-acid polypeptide reads, in one-letter code: Ubiquinone hydroxylase UbiL (429 aa).

The tract at residues 1 to 22 is disordered; sequence MSEPLLRGLAAGDPPSATGPVT.

Belongs to the UbiH/COQ6 family. Requires FAD as cofactor.

It carries out the reaction a 2-(all-trans-polyprenyl)phenol + NADPH + O2 + H(+) = a 3-(all-trans-polyprenyl)benzene-1,2-diol + NADP(+) + H2O. It participates in cofactor biosynthesis; ubiquinone biosynthesis. Functionally, catalyzes the hydroxylation of two positions of the aromatic ring during ubiquinone biosynthesis. This is Ubiquinone hydroxylase UbiL from Rhodospirillum rubrum (strain ATCC 11170 / ATH 1.1.1 / DSM 467 / LMG 4362 / NCIMB 8255 / S1).